Reading from the N-terminus, the 379-residue chain is MASEAHAVVDAHSPPKTTTVWVTGGAGFIGSWLVMRLLERGYNVHATVRDPENQKKVKHLLELPKADTNLTLWKADLAVEGSFDEAIQGCQGVFHVATPMDFESKDPENEVIKPTVRGMLSIIESCAKANTVKRLVFTSSAGTLDVQEDQKLFYDETSWSDLDFIYAKKMTGWMYFVSKILAEKAAMEEARKNNIDFISIIPPLVVGPFITSTFPPSLITALSLITAHYGIIKQGQYVHLDDLCEAHIFLYEHPKAEGRFICSSHHAIIYDVAKMVRQKWPEYYVPTEFKGIDKDLALVSFSSKKLMDIKFQFKHTLEDMYKGAIETCRQKQLLPFSTRSTADNGKDKEAIPISTENYSSGKENAPVANCTGKFTNGEI.

NADP(+)-binding residues include Lys-56 and Tyr-175.

Belongs to the NAD(P)-dependent epimerase/dehydratase family. Dihydroflavonol-4-reductase subfamily. Expressed in both leaf and hypocotyl tissues.

The enzyme catalyses a (2R,3S,4S)-leucoanthocyanidin + NADP(+) = a (2R,3R)-dihydroflavonol + NADPH + H(+). The catalysed reaction is (2S)-flavan-4-ol + NADP(+) = (2S)-flavanone + NADPH + H(+). Its pathway is pigment biosynthesis; anthocyanin biosynthesis. In terms of biological role, bifunctional enzyme involved in flavonoid metabolism. The chain is Dihydroflavonol 4-reductase from Solanum lycopersicum (Tomato).